Here is a 94-residue protein sequence, read N- to C-terminus: ESAT-6-like protein EsxI (94 aa).

It belongs to the WXG100 family. ESAT-6 subfamily.

The protein localises to the secreted. This chain is ESAT-6-like protein EsxI, found in Mycobacterium tuberculosis (strain ATCC 25618 / H37Rv).